The chain runs to 309 residues: Transcription initiation factor IIB 1 (309 aa).

A run of 2 repeats spans residues 125-208 (NELE…LREL) and 219-300 (DYVT…ELTQ).

The protein belongs to the TFIIB family.

Stabilizes TBP binding to an archaeal box-A promoter. Also responsible for recruiting RNA polymerase II to the pre-initiation complex (DNA-TBP-TFIIB). This chain is Transcription initiation factor IIB 1, found in Saccharolobus solfataricus (strain ATCC 35092 / DSM 1617 / JCM 11322 / P2) (Sulfolobus solfataricus).